The chain runs to 617 residues: Serine/threonine-protein phosphatase 2A activator 1 (617 aa).

Residues 1-11 are compositionally biased toward pro residues; sequence MDPTSKRPPPA. 5 disordered regions span residues 1-25, 84-169, 230-261, 376-398, and 572-617; these read MDPTSKRPPPAASSSTTYPPLPKLE, VSTS…ESES, GAGGEKKEEEEGTETETETETEGDSDKKTNEQ, SSPNEPTPLEGSVPNAPKPSDIT, and RFTP…PWTK. Residues 84–93 show a composition bias toward polar residues; it reads VSTSEPTTDG. The span at 94–104 shows a compositional bias: low complexity; the sequence is QQQQQQQQQRQ. A compositionally biased stretch (acidic residues) spans 239-252; it reads EEGTETETETETEG.

The protein belongs to the PTPA-type PPIase family.

The protein localises to the cytoplasm. Its subcellular location is the nucleus. The enzyme catalyses [protein]-peptidylproline (omega=180) = [protein]-peptidylproline (omega=0). Functionally, PPIases accelerate the folding of proteins. It catalyzes the cis-trans isomerization of proline imidic peptide bonds in oligopeptides. Acts as a regulatory subunit for PP2A-like phosphatases modulating their activity or substrate specificity, probably by inducing a conformational change in the catalytic subunit, a direct target of the PPIase. Can reactivate inactive phosphatase PP2A-phosphatase methylesterase complexes (PP2Ai) in presence of ATP and Mg(2+) by dissociating the inactive form from the complex. In Neurospora crassa (strain ATCC 24698 / 74-OR23-1A / CBS 708.71 / DSM 1257 / FGSC 987), this protein is Serine/threonine-protein phosphatase 2A activator 1 (rrd-1).